The chain runs to 306 residues: Manganese-binding lipoprotein MntA (306 aa).

An N-terminal signal peptide occupies residues Met-1–Gly-18. A lipid anchor (N-palmitoyl cysteine) is attached at Cys-19. Cys-19 carries S-diacylglycerol cysteine lipidation. Residues His-66, His-132, His-198, and Asp-278 each contribute to the Mn(2+) site.

It belongs to the bacterial solute-binding protein 9 family. In terms of assembly, the complex is probably composed of two ATP-binding proteins (MntB), two transmembrane proteins (MntC and MntD) and a solute-binding protein (MntA). Interacts with FloT.

It localises to the cell membrane. It is found in the membrane raft. Functionally, probably part of ATP-binding cassette (ABC) transport system MntABCD involved in manganese import. Binds manganese and delivers it to the membrane permease for translocation into the cytoplasm. The sequence is that of Manganese-binding lipoprotein MntA from Bacillus subtilis (strain 168).